Here is a 2925-residue protein sequence, read N- to C-terminus: TPR and ankyrin repeat-containing protein 1 (2925 aa).

TPR repeat units lie at residues 15 to 48 and 50 to 82; these read AVLL…DPTY and KGYY…VQRS. 6 ANK repeats span residues 168 to 198, 203 to 232, 240 to 276, 463 to 492, 497 to 518, and 546 to 575; these read EKYV…SVET, PLHA…EWKG, DGCT…DPTL, SQER…DPRA, EGDT…DIGF, and NGNT…KFDI. Disordered regions lie at residues 612 to 669, 706 to 741, and 1077 to 1103; these read SRQD…LPGT, PEDC…DCSE, and VEPG…SIEV. Positions 624 to 641 are enriched in polar residues; that stretch reads SKSTAPGHTSQLKSQGSF. Residues 720–730 show a composition bias toward basic and acidic residues; the sequence is AGKEGKKDDKP. A compositionally biased stretch (acidic residues) spans 1085–1103; the sequence is GGEEEEEEEDEEEEDSIEV. TPR repeat units lie at residues 1699–1732 and 1793–1826; these read PAEW…EKEK and LGKI…DLAL. The stretch at 2301 to 2330 forms a coiled coil; it reads EEFEKLLHQEEDNYNRELKALESEKDERGR.

The sequence is that of TPR and ankyrin repeat-containing protein 1 (TRANK1) from Homo sapiens (Human).